Here is a 170-residue protein sequence, read N- to C-terminus: Microfibrillar-associated protein 5 (170 aa).

The signal sequence occupies residues 1 to 20; sequence MTFFGPKVLLLLTALIMSSG. The short motif at 30–32 is the Cell attachment site element; that stretch reads RGD. Residue Asn76 is glycosylated (N-linked (GlcNAc...) asparagine).

The protein belongs to the MFAP family. As to quaternary structure, interacts with TGFB2. Interacts with BMP2. Interacts with FBN1 (via N-terminal domain) and FBN2. Post-translationally, forms intermolecular disulfide bonds either with other MAGP-2 molecules or with other components of the microfibrils. In terms of tissue distribution, associated with fibrillin-containing microfibrils of the developing nuchal ligament.

Its subcellular location is the secreted. It localises to the extracellular space. The protein localises to the extracellular matrix. In terms of biological role, may play a role in hematopoiesis. In the cardiovascular system, could regulate growth factors or participate in cell signaling in maintaining large vessel integrity. Component of the elastin-associated microfibrils. This is Microfibrillar-associated protein 5 (MFAP5) from Bos taurus (Bovine).